A 302-amino-acid polypeptide reads, in one-letter code: NAD kinase 2 (302 aa).

Residue Asp-78 is the Proton acceptor of the active site. NAD(+)-binding positions include 78–79, 152–153, Asp-182, 193–198, and Ala-217; these read DG, NE, and TAYALS.

This sequence belongs to the NAD kinase family. A divalent metal cation is required as a cofactor.

The protein resides in the cytoplasm. The enzyme catalyses NAD(+) + ATP = ADP + NADP(+) + H(+). In terms of biological role, involved in the regulation of the intracellular balance of NAD and NADP, and is a key enzyme in the biosynthesis of NADP. Catalyzes specifically the phosphorylation on 2'-hydroxyl of the adenosine moiety of NAD to yield NADP. The polypeptide is NAD kinase 2 (Parasynechococcus marenigrum (strain WH8102)).